The sequence spans 368 residues: Glutamate 5-kinase (368 aa).

Residue Lys-15 coordinates ATP. Positions 55, 143, and 155 each coordinate substrate. ATP-binding positions include Ser-175 to Asp-176 and Ser-217 to Lys-223. In terms of domain architecture, PUA spans Glu-277–Ala-354.

It belongs to the glutamate 5-kinase family.

It localises to the cytoplasm. The enzyme catalyses L-glutamate + ATP = L-glutamyl 5-phosphate + ADP. It participates in amino-acid biosynthesis; L-proline biosynthesis; L-glutamate 5-semialdehyde from L-glutamate: step 1/2. Functionally, catalyzes the transfer of a phosphate group to glutamate to form L-glutamate 5-phosphate. This chain is Glutamate 5-kinase, found in Sphingopyxis alaskensis (strain DSM 13593 / LMG 18877 / RB2256) (Sphingomonas alaskensis).